The chain runs to 277 residues: MSNKKQSNRLTEQHKLSQGVIGIFGDYAKAHDLAVGEVSKLVKKALSNEYPQLSFRYRDSIKKTEINEALKKIDPDLGGTLFVSNSSIKPDGGIVEVKDDYGEWRVVLVAEAKHQGKDIINIRNGLLVGKRGDQDLMAAGNAIERSHKNISEIANFMLSESHFPYVLFLEGSNFLTENISITRPDGRVVNLEYNSGILNRLDRLTAANYGMPINSNLCINKFVNHKDKSIMLQAASIYTQGDGREWDSKIMFEIMFDISTTSLRVLGRDLFEQLTSK.

Residues Asp-91, Glu-111, and Lys-113 contribute to the active site. Mg(2+) is bound by residues Asp-91 and Glu-111.

The protein belongs to the EcoRI type II restriction endonuclease family. Homodimer. Mg(2+) is required as a cofactor.

The enzyme catalyses Endonucleolytic cleavage of DNA to give specific double-stranded fragments with terminal 5'-phosphates.. Its function is as follows. A P subtype restriction enzyme that recognizes the double-stranded sequence 5'-GAATTC-3' and cleaves after G-1. The sequence is that of Type II restriction enzyme EcoRI (ecoRIR) from Escherichia coli.